The sequence spans 243 residues: Pyridoxine 5'-phosphate synthase (243 aa).

Asparagine 9 contacts 3-amino-2-oxopropyl phosphate. 11–12 is a 1-deoxy-D-xylulose 5-phosphate binding site; sequence DH. Position 20 (arginine 20) interacts with 3-amino-2-oxopropyl phosphate. Residue histidine 45 is the Proton acceptor of the active site. Residues arginine 47 and histidine 52 each coordinate 1-deoxy-D-xylulose 5-phosphate. Glutamate 72 (proton acceptor) is an active-site residue. Threonine 102 lines the 1-deoxy-D-xylulose 5-phosphate pocket. Residue histidine 193 is the Proton donor of the active site. 3-amino-2-oxopropyl phosphate contacts are provided by residues glycine 194 and 215 to 216; that span reads GH.

Belongs to the PNP synthase family. In terms of assembly, homooctamer; tetramer of dimers.

The protein resides in the cytoplasm. The catalysed reaction is 3-amino-2-oxopropyl phosphate + 1-deoxy-D-xylulose 5-phosphate = pyridoxine 5'-phosphate + phosphate + 2 H2O + H(+). It participates in cofactor biosynthesis; pyridoxine 5'-phosphate biosynthesis; pyridoxine 5'-phosphate from D-erythrose 4-phosphate: step 5/5. Functionally, catalyzes the complicated ring closure reaction between the two acyclic compounds 1-deoxy-D-xylulose-5-phosphate (DXP) and 3-amino-2-oxopropyl phosphate (1-amino-acetone-3-phosphate or AAP) to form pyridoxine 5'-phosphate (PNP) and inorganic phosphate. This Shigella boydii serotype 4 (strain Sb227) protein is Pyridoxine 5'-phosphate synthase.